A 1045-amino-acid chain; its full sequence is Translation initiation factor IF-2 (1045 aa).

Disordered stretches follow at residues 1–169 (MSDE…AQAP) and 184–451 (QAPA…RGGP). The span at 83–94 (SGGGGSSAGGLS) shows a compositional bias: gly residues. Positions 103–123 (RAIEAAREHQERQAAERRAAE) are enriched in basic and acidic residues. Over residues 124–151 (ARAASEAAAARDAAAKSAAAAKAAAAPA) the composition is skewed to low complexity. Positions 152 to 163 (PEAPAAPAPTPA) are enriched in pro residues. Residues 184 to 199 (QAPAAPVAAAPAAPRA) are compositionally biased toward low complexity. Basic and acidic residues-rich tracts occupy residues 227 to 237 (EPSRDRRDDRS) and 302 to 323 (RNDR…RPQG). A compositionally biased stretch (pro residues) spans 338–348 (RPAPGARPGPG). Low complexity predominate over residues 352–363 (GARPGVPASAPA). 2 stretches are compositionally biased toward basic and acidic residues: residues 381 to 393 (VGRK…DRRK) and 438 to 450 (RARE…RRGG). Residues 540–710 (PRPPVVTVMG…LLLAEVMDLK (171 aa)) enclose the tr-type G domain. Residues 549–556 (GHVDHGKT) form a G1 region. 549-556 (GHVDHGKT) serves as a coordination point for GTP. The tract at residues 574 to 578 (GITQH) is G2. The tract at residues 596 to 599 (DTPG) is G3. GTP contacts are provided by residues 596–600 (DTPGH) and 650–653 (NKMD). Residues 650-653 (NKMD) are G4. Positions 686–688 (SAK) are G5.

It belongs to the TRAFAC class translation factor GTPase superfamily. Classic translation factor GTPase family. IF-2 subfamily.

It is found in the cytoplasm. Its function is as follows. One of the essential components for the initiation of protein synthesis. Protects formylmethionyl-tRNA from spontaneous hydrolysis and promotes its binding to the 30S ribosomal subunits. Also involved in the hydrolysis of GTP during the formation of the 70S ribosomal complex. The chain is Translation initiation factor IF-2 from Caulobacter sp. (strain K31).